Consider the following 219-residue polypeptide: MASFISFLLLAALIGMASWQAIAAEPSPLQDFCVADLNSAVRVNGFACKNPTNVSADDFFKAAMLDKPRDTAVNKVGSNITLINVMEIPGLNTLGISIVRVDYAPLGLNPPHTHPRATEIFTVLEGTLYVGFVTSNPDNKLFSKVLNKGDVFVFPKGLIHFQFNLDPHKPAIATSAISSQNPGIITIANAVFRSNPPISDDILAKAFQVDKKIIDLLQA.

An N-terminal signal peptide occupies residues Met-1–Ala-23. Cys-33 and Cys-48 are joined by a disulfide. 2 N-linked (GlcNAc...) asparagine glycosylation sites follow: Asn-53 and Asn-79. Residues Ala-63–Asp-215 enclose the Cupin type-1 domain. Positions 112, 114, 119, and 160 each coordinate Mn(2+).

The protein belongs to the germin family. As to quaternary structure, oligomer (believed to be a pentamer but probably hexamer).

The protein localises to the secreted. The protein resides in the extracellular space. Its subcellular location is the apoplast. Functionally, plays a role in broad-spectrum disease resistance. Probably has no oxalate oxidase activity even if the active site is conserved. In Oryza sativa subsp. japonica (Rice), this protein is Putative germin-like protein 8-1.